The following is a 206-amino-acid chain: Putative precorrin-2 dehydrogenase (206 aa).

Residues 20–21 and 41–46 each bind NAD(+); these read SV and KEFDEE.

This sequence belongs to the precorrin-2 dehydrogenase / sirohydrochlorin ferrochelatase family. As to quaternary structure, homodimer.

The catalysed reaction is precorrin-2 + NAD(+) = sirohydrochlorin + NADH + 2 H(+). Its pathway is porphyrin-containing compound metabolism; siroheme biosynthesis; sirohydrochlorin from precorrin-2: step 1/1. In terms of biological role, involved in the archaeal biosynthesis of heme. Catalyzes the oxiation of precorrin-2 into sirohydroclorin. This Methanocaldococcus jannaschii (strain ATCC 43067 / DSM 2661 / JAL-1 / JCM 10045 / NBRC 100440) (Methanococcus jannaschii) protein is Putative precorrin-2 dehydrogenase.